Here is a 634-residue protein sequence, read N- to C-terminus: 1-deoxy-D-xylulose-5-phosphate synthase (634 aa).

Thiamine diphosphate is bound by residues H74 and 115 to 117; that span reads AHS. D146 lines the Mg(2+) pocket. Residues 147 to 148, N176, Y283, and E365 each bind thiamine diphosphate; that span reads GA. N176 contributes to the Mg(2+) binding site.

Belongs to the transketolase family. DXPS subfamily. As to quaternary structure, homodimer. Mg(2+) is required as a cofactor. Requires thiamine diphosphate as cofactor.

The enzyme catalyses D-glyceraldehyde 3-phosphate + pyruvate + H(+) = 1-deoxy-D-xylulose 5-phosphate + CO2. Its pathway is metabolic intermediate biosynthesis; 1-deoxy-D-xylulose 5-phosphate biosynthesis; 1-deoxy-D-xylulose 5-phosphate from D-glyceraldehyde 3-phosphate and pyruvate: step 1/1. Its function is as follows. Catalyzes the acyloin condensation reaction between C atoms 2 and 3 of pyruvate and glyceraldehyde 3-phosphate to yield 1-deoxy-D-xylulose-5-phosphate (DXP). The chain is 1-deoxy-D-xylulose-5-phosphate synthase from Burkholderia ambifaria (strain MC40-6).